The primary structure comprises 369 residues: MSSRGGKKKSTKTSRSAKAGVIFPVGRMLRYIKKGHPKYRIGVGAPVYMAAVLEYLTAEILELAGNAARDNKKGRVTPRHILLAVANDEELNQLLKGVTIASGGVLPNIHPELLAKKRGSKGKLEAIITPPPAKKAKSPSQKKPVSKKAGGKKGARKSKKKQGEVSKAASADSTTEGTPADGFTVLSTKSLFLGQKLQVVQADIASIDSDAVVHPTNTDFYIGGEVGNTLEKKGGKEFVEAVLELRKKNGPLEVAGAAVSAGHGLPAKFVIHCNSPVWGADKCEELLEKTVKNCLALADDKKLKSIAFPSIGSGRNGFPKQTAAQLILKAISSYFVSTMSSSIKTVYFVLFDSESIGIYVQEMAKLDAN.

The Histone H2A domain maps to Ser2 to Lys117. Lys7 and Lys9 each carry N6-lactoyllysine; alternate. An N6-methyllysine modification is found at Lys18. Position 116 is an N6-acetyllysine; alternate (Lys116). Lys116 participates in a covalent cross-link: Glycyl lysine isopeptide (Lys-Gly) (interchain with G-Cter in ubiquitin); alternate. Lys117 is covalently cross-linked (Glycyl lysine isopeptide (Lys-Gly) (interchain with G-Cter in ubiquitin)). Position 123 is an N6-acetyllysine; alternate (Lys123). N6,N6-dimethyllysine; alternate is present on Lys123. A Glycyl lysine isopeptide (Lys-Gly) (interchain with G-Cter in SUMO2); alternate cross-link involves residue Lys123. Positions Ile128–Ala180 are disordered. Thr129 carries the phosphothreonine modification. Positions Pro144–Lys160 are enriched in basic residues. Residue Lys167 forms a Glycyl lysine isopeptide (Lys-Gly) (interchain with G-Cter in SUMO2) linkage. Ser170 and Ser173 each carry phosphoserine. The residue at position 178 (Thr178) is a Phosphothreonine. Residues Thr184–Asp367 enclose the Macro domain. Lys189 participates in a covalent cross-link: Glycyl lysine isopeptide (Lys-Gly) (interchain with G-Cter in SUMO2). A glycoprotein contacts are provided by Asp203, Ile204, Val226, Ser275, Gly312, Ser313, Gly314, and Asn316. Lys320 participates in a covalent cross-link: Glycyl lysine isopeptide (Lys-Gly) (interchain with G-Cter in SUMO2).

Belongs to the histone H2A family. In terms of assembly, the nucleosome is a histone octamer containing two molecules each of H2A, H2B, H3 and H4 assembled in one H3-H4 heterotetramer and two H2A-H2B heterodimers. Interacts with HDAC1 and HDAC2. Interacts with SPOP. Part of a complex consisting of MACROH2A1, CUL3 and SPOP. As to quaternary structure, interacts with PARP1. In terms of processing, monoubiquitinated at either Lys-116 or Lys-117. May also be polyubiquitinated. Ubiquitination is mediated by the CUL3/SPOP E3 complex and does not promote proteasomal degradation. Instead, it is required for enrichment in inactive X chromosome chromatin. As to expression, widely expressed.

It is found in the nucleus. It localises to the chromosome. Its function is as follows. Variant histone H2A which replaces conventional H2A in a subset of nucleosomes where it represses transcription. Nucleosomes wrap and compact DNA into chromatin, limiting DNA accessibility to the cellular machineries which require DNA as a template. Histones thereby play a central role in transcription regulation, DNA repair, DNA replication and chromosomal stability. DNA accessibility is regulated via a complex set of post-translational modifications of histones, also called histone code, and nucleosome remodeling. Involved in stable X chromosome inactivation. Inhibits the binding of transcription factors, including NF-kappa-B, and interferes with the activity of remodeling SWI/SNF complexes. Inhibits histone acetylation by EP300 and recruits class I HDACs, which induces a hypoacetylated state of chromatin. In terms of biological role, isoform that specifically binds poly-ADP-ribose and O-acetyl-ADP-ribose and plays a key role in NAD(+) metabolism. Able to bind to the ends of poly-ADP-ribose chains created by PARP1 and cap them. This prevents PARP1 from further addition of ADP-ribose and thus limits the consumption of nuclear NAD(+), allowing the cell to maintain proper NAD(+) levels in both the nucleus and the mitochondria to promote proper mitochondrial respiration. Increases the expression of genes involved in redox metabolism, including SOD3. In contrast to isoform 1, does not bind poly-ADP-ribose. Represses SOD3 gene expression. The sequence is that of Core histone macro-H2A.1 from Homo sapiens (Human).